The primary structure comprises 759 residues: 5-methyltetrahydropteroyltriglutamate--homocysteine methyltransferase (759 aa).

A compositionally biased stretch (polar residues) spans 1-16 (MTQPVRRQPFTATITG). Positions 1–22 (MTQPVRRQPFTATITGSPRIGP) are disordered. 5-methyltetrahydropteroyltri-L-glutamate is bound by residues 24-27 (RELK) and lysine 118. L-homocysteine-binding positions include 437 to 439 (IGS) and glutamate 490. L-methionine contacts are provided by residues 437–439 (IGS) and glutamate 490. 5-methyltetrahydropteroyltri-L-glutamate contacts are provided by residues 521 to 522 (RC) and tryptophan 567. Aspartate 605 lines the L-homocysteine pocket. Aspartate 605 is an L-methionine binding site. Glutamate 611 is a 5-methyltetrahydropteroyltri-L-glutamate binding site. Histidine 647, cysteine 649, and glutamate 671 together coordinate Zn(2+). Histidine 700 serves as the catalytic Proton donor. Cysteine 732 is a Zn(2+) binding site.

Belongs to the vitamin-B12 independent methionine synthase family. Zn(2+) is required as a cofactor.

The enzyme catalyses 5-methyltetrahydropteroyltri-L-glutamate + L-homocysteine = tetrahydropteroyltri-L-glutamate + L-methionine. It participates in amino-acid biosynthesis; L-methionine biosynthesis via de novo pathway; L-methionine from L-homocysteine (MetE route): step 1/1. Its function is as follows. Catalyzes the transfer of a methyl group from 5-methyltetrahydrofolate to homocysteine resulting in methionine formation. This is 5-methyltetrahydropteroyltriglutamate--homocysteine methyltransferase from Mycobacterium tuberculosis (strain ATCC 25177 / H37Ra).